Reading from the N-terminus, the 353-residue chain is UPF0658 Golgi apparatus membrane protein C23H3.04 (353 aa).

Helical transmembrane passes span 39–59 (IFFL…EGYC), 76–96 (SLPI…YLCV), 103–123 (NIIE…YSIV), 172–192 (PFLI…GFLA), 226–246 (LLKI…MVLP), 249–269 (AVVE…ILTL), 281–301 (LMMT…FKII), and 318–338 (MITT…AIGF).

Belongs to the UPF0658 family.

Its subcellular location is the golgi apparatus membrane. The chain is UPF0658 Golgi apparatus membrane protein C23H3.04 from Schizosaccharomyces pombe (strain 972 / ATCC 24843) (Fission yeast).